The chain runs to 424 residues: N-succinylarginine dihydrolase (424 aa).

Substrate-binding positions include 19 to 28 (AGLSPGNIAS), N110, and 137 to 138 (HR). E174 is a catalytic residue. Substrate is bound at residue R207. The active site involves H240. Residues D242 and N349 each contribute to the substrate site. Residue C355 is the Nucleophile of the active site.

The protein belongs to the succinylarginine dihydrolase family. Homodimer.

It catalyses the reaction N(2)-succinyl-L-arginine + 2 H2O + 2 H(+) = N(2)-succinyl-L-ornithine + 2 NH4(+) + CO2. Its pathway is amino-acid degradation; L-arginine degradation via AST pathway; L-glutamate and succinate from L-arginine: step 2/5. Its function is as follows. Catalyzes the hydrolysis of N(2)-succinylarginine into N(2)-succinylornithine, ammonia and CO(2). The polypeptide is N-succinylarginine dihydrolase (Rhizorhabdus wittichii (strain DSM 6014 / CCUG 31198 / JCM 15750 / NBRC 105917 / EY 4224 / RW1) (Sphingomonas wittichii)).